The sequence spans 954 residues: Centrosomal protein of 112 kDa (954 aa).

Residues 276–954 (QKHDAEVQKI…EELTTYQSRR (679 aa)) adopt a coiled-coil conformation.

Its subcellular location is the cytoplasm. It localises to the cytoskeleton. The protein resides in the microtubule organizing center. The protein localises to the centrosome. This is Centrosomal protein of 112 kDa (Cep112) from Mus musculus (Mouse).